The chain runs to 167 residues: Ribosome rescue factor SmrB (167 aa).

Positions 91-166 constitute a Smr domain; that stretch reads LDLHGLTREQ…GEAAILILVD (76 aa).

This sequence belongs to the SmrB family. As to quaternary structure, associates with collided ribosomes, but not with correctly translating polysomes.

Acts as a ribosome collision sensor. Detects stalled/collided disomes (pairs of ribosomes where the leading ribosome is stalled and a second ribosome has collided with it) and endonucleolytically cleaves mRNA at the 5' boundary of the stalled ribosome. Stalled/collided disomes form a new interface (primarily via the 30S subunits) that binds SmrB. Cleaved mRNA becomes available for tmRNA ligation, leading to ribosomal subunit dissociation and rescue of stalled ribosomes. The sequence is that of Ribosome rescue factor SmrB from Haemophilus influenzae (strain ATCC 51907 / DSM 11121 / KW20 / Rd).